A 91-amino-acid chain; its full sequence is Late embryogenesis abundant protein EMB564 (91 aa).

2 stretches are compositionally biased toward basic and acidic residues: residues 1 to 19 (MASG…REGE) and 32 to 51 (EAQE…RREQ). A disordered region spans residues 1-91 (MASGQESRKE…VTIDESKFTK (91 aa)).

It belongs to the small hydrophilic plant seed protein family.

LEA proteins are late embryonic proteins abundant in higher plant seed embryos. They may play an essential role in seed survival and in controlling water exchanges during seed desiccation and imbibition. The polypeptide is Late embryogenesis abundant protein EMB564 (Zea mays (Maize)).